A 161-amino-acid polypeptide reads, in one-letter code: Regulator of ribonuclease activity A (161 aa).

The protein belongs to the RraA family. As to quaternary structure, homotrimer. Binds to both RNA-binding sites in the C-terminal region of Rne and to RhlB.

The protein resides in the cytoplasm. Its function is as follows. Globally modulates RNA abundance by binding to RNase E (Rne) and regulating its endonucleolytic activity. Can modulate Rne action in a substrate-dependent manner by altering the composition of the degradosome. Modulates RNA-binding and helicase activities of the degradosome. This Shewanella denitrificans (strain OS217 / ATCC BAA-1090 / DSM 15013) protein is Regulator of ribonuclease activity A.